Consider the following 75-residue polypeptide: Small ribosomal subunit protein bS18 (75 aa).

The protein belongs to the bacterial ribosomal protein bS18 family. As to quaternary structure, part of the 30S ribosomal subunit. Forms a tight heterodimer with protein bS6.

Binds as a heterodimer with protein bS6 to the central domain of the 16S rRNA, where it helps stabilize the platform of the 30S subunit. This Buchnera aphidicola subsp. Schizaphis graminum (strain Sg) protein is Small ribosomal subunit protein bS18.